A 4699-amino-acid polypeptide reads, in one-letter code: PKS-NRPS hybrid synthetase cheA (4699 aa).

Residues 1–21 (MSDNDDEWNGFSDDNGEDDGP) show a composition bias toward acidic residues. 2 disordered regions span residues 1-38 (MSDN…WDVP) and 136-165 (DGWR…HTQH). A compositionally biased stretch (basic and acidic residues) spans 136–148 (DGWRFHSHPDPQH). Residues 172–520 (SLDTIAELSN…VQQNVEEMAK (349 aa)) are N-terminal acylcarrier protein transacylase domain (SAT). Positions 625 to 836 (PLPSVEDNVA…AGAPGARVTR (212 aa)) are disordered. Positions 674–688 (TQGSQGSQGRRTPGS) are enriched in low complexity. Residues 724–737 (PKRRGRPPGSKNKK) show a composition bias toward basic residues. Residues 737–1138 (KKDQAPAPAE…GANAHAILEA (402 aa)) form the Ketosynthase family 3 (KS3) domain. Positions 764–777 (ASAPRRGLRAAPAA) are enriched in low complexity. Over residues 802 to 816 (ATASTPRAQSDQGTG) the composition is skewed to polar residues. Catalysis depends on for beta-ketoacyl synthase activity residues C873, H1012, and H1058. The interval 1250–1573 (VFTGQGAQWP…VGTLLRQRDA (324 aa)) is malonyl-CoA:ACP transacylase (MAT) domain. An N-terminal hotdog fold region spans residues 1644–1777 (NELLGTRIMD…ANLIISLGEP (134 aa)). The 304-residue stretch at 1644–1947 (NELLGTRIMD…TKPLVPPTPS (304 aa)) folds into the PKS/mFAS DH domain. The dehydratase (DH) domain stretch occupies residues 1645 to 1941 (ELLGTRIMDN…QLQGLHTKPL (297 aa)). The active-site Proton acceptor; for dehydratase activity is the H1676. Residues 1794-1947 (MLDVPAERFY…TKPLVPPTPS (154 aa)) form a C-terminal hotdog fold region. Catalysis depends on D1854, which acts as the Proton donor; for dehydratase activity. Residues 2050 to 2241 (LNRFYIEALG…RNTGFSGADE (192 aa)) are methyltransferase (MT) domain. A ketoreductase (KR) domain region spans residues 2794 to 2967 (TYWLVGLTGG…PAAAVNIGAV (174 aa)). Residues 3076–3153 (DASEILEDAY…ALFELVKERA (78 aa)) form the Carrier 1 domain. S3113 bears the O-(pantetheine 4'-phosphoryl)serine mark. A disordered region spans residues 3164–3265 (EQPDQVKSPR…PVASSPDAGL (102 aa)). Polar residues-rich tracts occupy residues 3200–3209 (SLDQGSSWDS) and 3218–3233 (GHDS…SSPI). The tract at residues 3268 to 3696 (SVPLSFSQAR…PISRISKPPL (429 aa)) is condensation (C) domain. An adenylation (A) domain region spans residues 3730–4113 (IQAHPDKLAL…GGLILEGRID (384 aa)). One can recognise a Carrier 2 domain in the interval 4236–4316 (EGLPAMQHLI…TMAALVASGS (81 aa)). Residues 4241–4313 (MQHLIKQLWE…TLETMAALVA (73 aa)) are thiolation and peptide carrier (T) domain. S4276 bears the O-(pantetheine 4'-phosphoryl)serine mark. Residues 4367-4598 (LTGSTGFLGR…ISVHTVAAAI (232 aa)) form a reductase (R) domain region.

The protein in the C-terminal section; belongs to the NRP synthetase family.

Its pathway is secondary metabolite biosynthesis. Functionally, PKS-NRPS hybrid synthetase; part of the gene cluster that mediates the biosynthesis of chaetoglobosin A which has a unique inhibitory activity against actin polymerization in mammalian cells. Chaetoglobosin A and its intermediates are involved in the morphological differentiation of C.globosum. The first step of the pathway is the synthesis of prochaetoglobosin I via condensation of one acetyl-CoA, 8 malonyl-CoA, and a L-tryptophan molecule by the PKS-NRPS hybrid synthetase cheA, followed by reduction of backbone double bond to install desired geometry by the enoyl reductase cheB. Further multiple oxidation steps performed by the cytochrome P450 monooxygenases cheE and cheG, as well as by the FAD-linked oxidoreductase cheF, lead to the formation of chaetoglobosin A. Depending on the order of action of these reductases, distinct intermediates can be identified. Within the pathway, the cytochrome P450 monooxygenase cheE catalyzes a stereospecific epoxidation on prochaetoglobosin I, cytoglobosin D, and chaetoglobosin J intermediates. The FAD-linked oxidoreductase cheF performs dehydrogenation of the C-20 hydroxyl groups in the 20-dihyrochaetoglobosin A and cytoglobosin D intermediates. Finally, the cytochrome P450 monooxygenase cheG can catalyze the stereospecific dihydroxylation of prochaetoglobosin I and prochaetoglobosin IV at C-19 and C-20, respectively. The Diels-Alderase cheD may play a role in the post-PKS-NRPS biosynthetic steps catalyzing Diels-Alder cyclization. In Chaetomium globosum (strain ATCC 6205 / CBS 148.51 / DSM 1962 / NBRC 6347 / NRRL 1970) (Soil fungus), this protein is PKS-NRPS hybrid synthetase cheA.